A 239-amino-acid polypeptide reads, in one-letter code: Biosynthetic peptidoglycan transglycosylase (239 aa).

Residues 29 to 49 form a helical membrane-spanning segment; that stretch reads GMFGLGALMLVWIVAYAVVPV.

The protein belongs to the glycosyltransferase 51 family.

The protein localises to the cell inner membrane. The catalysed reaction is [GlcNAc-(1-&gt;4)-Mur2Ac(oyl-L-Ala-gamma-D-Glu-L-Lys-D-Ala-D-Ala)](n)-di-trans,octa-cis-undecaprenyl diphosphate + beta-D-GlcNAc-(1-&gt;4)-Mur2Ac(oyl-L-Ala-gamma-D-Glu-L-Lys-D-Ala-D-Ala)-di-trans,octa-cis-undecaprenyl diphosphate = [GlcNAc-(1-&gt;4)-Mur2Ac(oyl-L-Ala-gamma-D-Glu-L-Lys-D-Ala-D-Ala)](n+1)-di-trans,octa-cis-undecaprenyl diphosphate + di-trans,octa-cis-undecaprenyl diphosphate + H(+). Its pathway is cell wall biogenesis; peptidoglycan biosynthesis. Peptidoglycan polymerase that catalyzes glycan chain elongation from lipid-linked precursors. In Jannaschia sp. (strain CCS1), this protein is Biosynthetic peptidoglycan transglycosylase.